Consider the following 466-residue polypeptide: Asparagine--tRNA ligase (466 aa).

Belongs to the class-II aminoacyl-tRNA synthetase family. Homodimer.

The protein resides in the cytoplasm. It catalyses the reaction tRNA(Asn) + L-asparagine + ATP = L-asparaginyl-tRNA(Asn) + AMP + diphosphate + H(+). In Buchnera aphidicola subsp. Acyrthosiphon pisum (strain APS) (Acyrthosiphon pisum symbiotic bacterium), this protein is Asparagine--tRNA ligase.